The sequence spans 218 residues: Octanoyltransferase (218 aa).

The region spanning 32-211 (INTYDEIWFL…KLSQLLNVSI (180 aa)) is the BPL/LPL catalytic domain. Substrate-binding positions include 75-82 (RGGQITYH), 142-144 (SLG), and 155-157 (GLS). C173 (acyl-thioester intermediate) is an active-site residue.

This sequence belongs to the LipB family.

The protein localises to the cytoplasm. The enzyme catalyses octanoyl-[ACP] + L-lysyl-[protein] = N(6)-octanoyl-L-lysyl-[protein] + holo-[ACP] + H(+). It participates in protein modification; protein lipoylation via endogenous pathway; protein N(6)-(lipoyl)lysine from octanoyl-[acyl-carrier-protein]: step 1/2. In terms of biological role, catalyzes the transfer of endogenously produced octanoic acid from octanoyl-acyl-carrier-protein onto the lipoyl domains of lipoate-dependent enzymes. Lipoyl-ACP can also act as a substrate although octanoyl-ACP is likely to be the physiological substrate. The protein is Octanoyltransferase of Buchnera aphidicola subsp. Schizaphis graminum (strain Sg).